The chain runs to 304 residues: Tyrosine recombinase XerC (304 aa).

In terms of domain architecture, Core-binding (CB) spans N6–V92. Residues H113–D292 enclose the Tyr recombinase domain. Active-site residues include R152, K176, H244, R247, and H270. Y279 functions as the O-(3'-phospho-DNA)-tyrosine intermediate in the catalytic mechanism.

The protein belongs to the 'phage' integrase family. XerC subfamily. Forms a cyclic heterotetrameric complex composed of two molecules of XerC and two molecules of XerD.

It is found in the cytoplasm. Its function is as follows. Site-specific tyrosine recombinase, which acts by catalyzing the cutting and rejoining of the recombining DNA molecules. The XerC-XerD complex is essential to convert dimers of the bacterial chromosome into monomers to permit their segregation at cell division. It also contributes to the segregational stability of plasmids. This Haemophilus ducreyi (strain 35000HP / ATCC 700724) protein is Tyrosine recombinase XerC.